A 394-amino-acid chain; its full sequence is Elongation factor Tu (394 aa).

The 196-residue stretch at 10 to 205 folds into the tr-type G domain; sequence KPHMNVGTIG…TMDSYFDLPE (196 aa). Residues 19–26 form a G1 region; the sequence is GHVDHGKT. A GTP-binding site is contributed by 19–26; the sequence is GHVDHGKT. Residue Thr26 coordinates Mg(2+). A G2 region spans residues 61-65; it reads GITIN. The tract at residues 82 to 85 is G3; it reads DCPG. GTP contacts are provided by residues 82–86 and 137–140; these read DCPGH and NKLD. The tract at residues 137–140 is G4; the sequence is NKLD. The interval 173-175 is G5; that stretch reads SAF.

Belongs to the TRAFAC class translation factor GTPase superfamily. Classic translation factor GTPase family. EF-Tu/EF-1A subfamily. In terms of assembly, monomer.

It is found in the cytoplasm. The enzyme catalyses GTP + H2O = GDP + phosphate + H(+). GTP hydrolase that promotes the GTP-dependent binding of aminoacyl-tRNA to the A-site of ribosomes during protein biosynthesis. The chain is Elongation factor Tu from Borrelia hermsii (strain HS1 / DAH).